The chain runs to 255 residues: UPF0246 protein CC_3385 (255 aa).

This sequence belongs to the UPF0246 family.

In Caulobacter vibrioides (strain ATCC 19089 / CIP 103742 / CB 15) (Caulobacter crescentus), this protein is UPF0246 protein CC_3385.